A 324-amino-acid polypeptide reads, in one-letter code: Probable tRNA pseudouridine synthase B (324 aa).

D72 functions as the Nucleophile in the catalytic mechanism. The region spanning 239–314 is the PUA domain; sequence LPRVVILDSA…LVIETRKVFM (76 aa).

This sequence belongs to the pseudouridine synthase TruB family. Type 2 subfamily.

It carries out the reaction uridine(55) in tRNA = pseudouridine(55) in tRNA. In terms of biological role, could be responsible for synthesis of pseudouridine from uracil-55 in the psi GC loop of transfer RNAs. This is Probable tRNA pseudouridine synthase B from Methanothermobacter thermautotrophicus (strain ATCC 29096 / DSM 1053 / JCM 10044 / NBRC 100330 / Delta H) (Methanobacterium thermoautotrophicum).